Here is a 218-residue protein sequence, read N- to C-terminus: Pyridoxine/pyridoxamine 5'-phosphate oxidase (218 aa).

Substrate-binding positions include 14-17 (RREY) and K72. FMN contacts are provided by residues 67 to 72 (RIVLLK), 82 to 83 (YT), R88, K89, and Q111. 3 residues coordinate substrate: Y129, R133, and S137. FMN-binding positions include 146-147 (QS) and W191. 197 to 199 (RLH) contacts substrate. Residue R201 coordinates FMN.

This sequence belongs to the pyridoxamine 5'-phosphate oxidase family. Homodimer. It depends on FMN as a cofactor.

The enzyme catalyses pyridoxamine 5'-phosphate + O2 + H2O = pyridoxal 5'-phosphate + H2O2 + NH4(+). It catalyses the reaction pyridoxine 5'-phosphate + O2 = pyridoxal 5'-phosphate + H2O2. It participates in cofactor metabolism; pyridoxal 5'-phosphate salvage; pyridoxal 5'-phosphate from pyridoxamine 5'-phosphate: step 1/1. Its pathway is cofactor metabolism; pyridoxal 5'-phosphate salvage; pyridoxal 5'-phosphate from pyridoxine 5'-phosphate: step 1/1. In terms of biological role, catalyzes the oxidation of either pyridoxine 5'-phosphate (PNP) or pyridoxamine 5'-phosphate (PMP) into pyridoxal 5'-phosphate (PLP). The protein is Pyridoxine/pyridoxamine 5'-phosphate oxidase of Salmonella typhi.